A 2556-amino-acid polypeptide reads, in one-letter code: Ubiquitin carboxyl-terminal hydrolase 9Y (2556 aa).

A compositionally biased stretch (polar residues) spans 1–33 (MTITTRGSPVGENESQGQTSDGQPQPSFQQNQI). A disordered region spans residues 1-68 (MTITTRGSPV…QHEEEDPSFP (68 aa)). The span at 34–44 (SSSDSSNETSP) shows a compositional bias: low complexity. Ser587 carries the phosphoserine modification. Residue Thr589 is modified to Phosphothreonine. Positions 971–999 (NMPSSPDSSSDSSAGPPGNHSHNNYRDVS) are disordered. Residues 973–983 (PSSPDSSSDSS) show a composition bias toward low complexity. Residues 1559–1958 (VGLKNAGATC…NAYILFYERM (400 aa)) enclose the USP domain. Cys1568 (nucleophile) is an active-site residue. Positions 1729, 1731, 1773, and 1776 each coordinate Zn(2+). Catalysis depends on His1881, which acts as the Proton acceptor. A Phosphoserine modification is found at Ser2447. The tract at residues 2513–2556 (QNYVPEQPFSGPASHHLNNPQKNDKPQETHESNEEISSCLIKDQ) is disordered. Over residues 2534 to 2545 (KNDKPQETHESN) the composition is skewed to basic and acidic residues. Phosphoserine is present on Ser2549.

The protein belongs to the peptidase C19 family.

It catalyses the reaction Thiol-dependent hydrolysis of ester, thioester, amide, peptide and isopeptide bonds formed by the C-terminal Gly of ubiquitin (a 76-residue protein attached to proteins as an intracellular targeting signal).. Its pathway is protein modification; protein ubiquitination. Deubiquitinase that mediates deubiquitination of target proteins. May stabilize target proteins that are important for male germ cell development. The sequence is that of Ubiquitin carboxyl-terminal hydrolase 9Y from Mus musculus (Mouse).